The sequence spans 56 residues: Large ribosomal subunit protein bL32 (56 aa).

Positions 1-20 are enriched in basic residues; sequence MAVPKRRTSRSNTRSRRSQW. The segment at 1–24 is disordered; it reads MAVPKRRTSRSNTRSRRSQWKAKV.

The protein belongs to the bacterial ribosomal protein bL32 family.

This chain is Large ribosomal subunit protein bL32, found in Frankia casuarinae (strain DSM 45818 / CECT 9043 / HFP020203 / CcI3).